The chain runs to 479 residues: Inhibitory synaptic factor 2A (479 aa).

Serine 177 is modified (phosphoserine). Disordered stretches follow at residues 226–247 (GRAKQDRGRPNSEEPAPPALRR) and 315–338 (SPECSEQPSQTHTPPGLGNQPSPT). The segment covering 228–237 (AKQDRGRPNS) has biased composition (basic and acidic residues). The span at 318-337 (CSEQPSQTHTPPGLGNQPSP) shows a compositional bias: polar residues. Residues 353–379 (TEVVDLKAQLQMMENLISSSQETIKVL) are a coiled coil. The span at 449–461 (SPYSQETYSSTPK) shows a compositional bias: polar residues. Residues 449–472 (SPYSQETYSSTPKQKSKTESKKHG) form a disordered region.

This sequence belongs to the INSYN2 family. As to quaternary structure, interacts with GPHN.

It localises to the postsynaptic density. Its function is as follows. Component of the protein machinery at the inhibitory synapses, probably acting as a scaffold. Inhibitory synapses dampen neuronal activity through postsynaptic hyperpolarization. This synaptic inhibition is fundamental for the functioning of the central nervous system, shaping and orchestrating the flow of information through neuronal networks to generate a precise neural code. The chain is Inhibitory synaptic factor 2A from Homo sapiens (Human).